Consider the following 102-residue polypeptide: RNA-binding protein Hfq (102 aa).

The Sm domain maps to 9 to 68; sequence DPFLNALRRERVPVSIYLVNGIKLQGQIESFDQFVILLKNTVSQMVYKHAISTVVPSRPV. A disordered region spans residues 63-102; it reads VPSRPVSHHSNNAGGGSNNYHHSNNAQPSSAASQDSEDAE. Positions 70–96 are enriched in low complexity; it reads HHSNNAGGGSNNYHHSNNAQPSSAASQ.

Belongs to the Hfq family. As to quaternary structure, homohexamer.

Functionally, RNA chaperone that binds small regulatory RNA (sRNAs) and mRNAs to facilitate mRNA translational regulation in response to envelope stress, environmental stress and changes in metabolite concentrations. Also binds with high specificity to tRNAs. The chain is RNA-binding protein Hfq from Cronobacter sakazakii (strain ATCC BAA-894) (Enterobacter sakazakii).